A 547-amino-acid polypeptide reads, in one-letter code: Large cysteine-rich periplasmic protein OmcB (547 aa).

Residues M1 to A22 form the signal peptide. The segment at K45–K84 is disordered. The span at H52–H61 shows a compositional bias: basic residues.

Part of a disulfide cross-linked outer membrane complex (COMC) composed of the major outer membrane porin (MOMP), the small cysteine-rich protein (OmcA) and the large cysteine-rich periplasmic protein (OmcB).

The protein localises to the periplasm. In terms of biological role, in elementary bodies (EBs, the infectious stage, which is able to survive outside the host cell) provides the structural integrity of the outer envelope through disulfide cross-links with the small cysteine-rich protein and the major outer membrane protein. It has been described in publications as the Sarkosyl-insoluble COMC (Chlamydia outer membrane complex), and serves as the functional equivalent of peptidoglycan. The polypeptide is Large cysteine-rich periplasmic protein OmcB (omcB) (Chlamydia trachomatis serovar L2 (strain ATCC VR-902B / DSM 19102 / 434/Bu)).